The following is a 255-amino-acid chain: tRNA (guanine-N(7)-)-methyltransferase (255 aa).

Residues 1-21 (MMHDDPNEAGLPPHDDAIPDE) form a disordered region. Glu86, Glu111, Asp138, and Asp161 together coordinate S-adenosyl-L-methionine. Asp161 is a catalytic residue. Substrate-binding positions include Lys165, Asp197, and 232–235 (TKFE).

The protein belongs to the class I-like SAM-binding methyltransferase superfamily. TrmB family.

The catalysed reaction is guanosine(46) in tRNA + S-adenosyl-L-methionine = N(7)-methylguanosine(46) in tRNA + S-adenosyl-L-homocysteine. Its pathway is tRNA modification; N(7)-methylguanine-tRNA biosynthesis. In terms of biological role, catalyzes the formation of N(7)-methylguanine at position 46 (m7G46) in tRNA. In Burkholderia lata (strain ATCC 17760 / DSM 23089 / LMG 22485 / NCIMB 9086 / R18194 / 383), this protein is tRNA (guanine-N(7)-)-methyltransferase.